The sequence spans 404 residues: Homoserine O-succinyltransferase (404 aa).

A compositionally biased stretch (low complexity) spans 1–25 (MTDIQADPAVTAADAAQADTSSPTA). Residues 1 to 30 (MTDIQADPAVTAADAAQADTSSPTAHQGKP) form a disordered region. The region spanning 75-384 (NAVLICHALN…HGHDAFLLED (310 aa)) is the AB hydrolase-1 domain. S179 functions as the Nucleophile in the catalytic mechanism. A substrate-binding site is contributed by R249. Active-site residues include D344 and H377. Substrate is bound at residue D378.

This sequence belongs to the AB hydrolase superfamily. MetX family. Homodimer.

It localises to the cytoplasm. The catalysed reaction is L-homoserine + succinyl-CoA = O-succinyl-L-homoserine + CoA. Its pathway is amino-acid biosynthesis; L-methionine biosynthesis via de novo pathway; O-succinyl-L-homoserine from L-homoserine: step 1/1. Functionally, transfers a succinyl group from succinyl-CoA to L-homoserine, forming succinyl-L-homoserine. In Ralstonia pickettii (strain 12J), this protein is Homoserine O-succinyltransferase.